Here is a 1233-residue protein sequence, read N- to C-terminus: Pesticidal crystal protein Cry1Bc (1233 aa).

It belongs to the delta endotoxin family.

Promotes colloidosmotic lysis by binding to the midgut epithelial cells of insects. The chain is Pesticidal crystal protein Cry1Bc (cry1Bc) from Bacillus thuringiensis subsp. morrisoni.